Consider the following 132-residue polypeptide: Small ribosomal subunit protein uS8 (132 aa).

The protein belongs to the universal ribosomal protein uS8 family. As to quaternary structure, part of the 30S ribosomal subunit. Contacts proteins S5 and S12.

In terms of biological role, one of the primary rRNA binding proteins, it binds directly to 16S rRNA central domain where it helps coordinate assembly of the platform of the 30S subunit. The sequence is that of Small ribosomal subunit protein uS8 from Maricaulis maris (strain MCS10) (Caulobacter maris).